A 166-amino-acid polypeptide reads, in one-letter code: Transcriptional repressor NrdR (166 aa).

The segment at 3–34 (CPFCRNPDSRVVDSRMADDGSSIRRRRQCPEC) is a zinc-finger region. One can recognise an ATP-cone domain in the interval 46 to 136 (LSVIKRSGVG…VYQAFESLED (91 aa)).

The protein belongs to the NrdR family. Zn(2+) serves as cofactor.

In terms of biological role, negatively regulates transcription of bacterial ribonucleotide reductase nrd genes and operons by binding to NrdR-boxes. The polypeptide is Transcriptional repressor NrdR (Paenarthrobacter aurescens (strain TC1)).